Consider the following 349-residue polypeptide: tRNA pseudouridine synthase D (349 aa).

A substrate-binding site is contributed by Phe-27. Residue Asp-80 is the Nucleophile of the active site. Asn-129 is a substrate binding site. The TRUD domain occupies 155–303 (GVPNYFGAQR…VEASRRAMLL (149 aa)). Position 329 (Phe-329) interacts with substrate.

This sequence belongs to the pseudouridine synthase TruD family.

The enzyme catalyses uridine(13) in tRNA = pseudouridine(13) in tRNA. Responsible for synthesis of pseudouridine from uracil-13 in transfer RNAs. This is tRNA pseudouridine synthase D from Salmonella choleraesuis (strain SC-B67).